A 1265-amino-acid polypeptide reads, in one-letter code: Protein diaphanous homolog 1 (1265 aa).

Position 1 is an N-acetylmethionine (Met-1). Gly residues predominate over residues 1–12; that stretch reads MEPSGGGLGPGR. Disordered stretches follow at residues 1–42 and 54–83; these read MEPS…FTLK and SMRI…TAQS. Residue Ser-22 is modified to Phosphoserine. A compositionally biased stretch (basic and acidic residues) spans 54–65; the sequence is SMRIKKEKEKPN. Positions 67 to 83 are enriched in polar residues; sequence AHRNSSASYGDDPTAQS. Residues 84 to 449 enclose the GBD/FH3 domain; sequence LQDISDDQVL…QIVLHKNGTD (366 aa). A coiled-coil region spans residues 474–568; the sequence is VEKSEAKATE…KKEMASLSAV (95 aa). Positions 573–742 are disordered; sequence SVSSSAAVPQ…PPPPGMGVPP (170 aa). 2 stretches are compositionally biased toward pro residues: residues 594-628 and 645-742; these read IPPP…PPLP and IPPP…GVPP. Residues 625–757 enclose the FH1 domain; that stretch reads PPLPGGACIS…FGIPAAPVLP (133 aa). Thr-761 is subject to Phosphothreonine. One can recognise an FH2 domain in the interval 762–1164; that stretch reads PKKVYKPEVQ…MRRAKLAKEK (403 aa). Lys-1050 and Lys-1096 each carry N6-acetyllysine. The residue at position 1114 (Tyr-1114) is a Phosphotyrosine. A coiled-coil region spans residues 1141 to 1185; that stretch reads AVKENQKRRETEEKMRRAKLAKEKAEKERLEKQQKREQLIDMNAE. Positions 1187-1215 constitute a DAD domain; it reads DETGVMDSLLEALQSGAAFRRKRGPRQVN. Residue Ser-1247 is modified to Phosphoserine.

Belongs to the formin homology family. Diaphanous subfamily. As to quaternary structure, homodimer. Interacts with the GTP-bound form of RHOA. Interacts with RHOC, PFY1, MAPRE1, BAIAP2 and APC. Interacts with SCAI. Interacts with DCAF7, via FH2 domain. Interacts with NCDN. Interacts with OSBPL10, OSBPL2, VIM, TUBB and DYN1. Post-translationally, phosphorylation at Thr-761 is stimulated by cAMP and regulates stability, complex formation and mitochondrial movement. Expressed in testis. Present in Sertoli cells (at protein level).

The protein localises to the cell membrane. Its subcellular location is the cell projection. It localises to the ruffle membrane. It is found in the cytoplasm. The protein resides in the cytoskeleton. The protein localises to the microtubule organizing center. Its subcellular location is the centrosome. It localises to the spindle. It is found in the nucleus. Its function is as follows. Actin nucleation and elongation factor required for the assembly of F-actin structures, such as actin cables and stress fibers. Binds to the barbed end of the actin filament and slows down actin polymerization and depolymerization. Required for cytokinesis, and transcriptional activation of the serum response factor. DFR proteins couple Rho and Src tyrosine kinase during signaling and the regulation of actin dynamics. Functions as a scaffold protein for MAPRE1 and APC to stabilize microtubules and promote cell migration. Has neurite outgrowth promoting activity. Acts in a Rho-dependent manner to recruit PFY1 to the membrane. The MEMO1-RHOA-DIAPH1 signaling pathway plays an important role in ERBB2-dependent stabilization of microtubules at the cell cortex. It controls the localization of APC and CLASP2 to the cell membrane, via the regulation of GSK3B activity. In turn, membrane-bound APC allows the localization of the MACF1 to the cell membrane, which is required for microtubule capture and stabilization. Plays a role in the regulation of cell morphology and cytoskeletal organization. Required in the control of cell shape. Also acts as an actin nucleation and elongation factor in the nucleus by promoting nuclear actin polymerization inside the nucleus to drive serum-dependent SRF-MRTFA activity. The protein is Protein diaphanous homolog 1 of Rattus norvegicus (Rat).